The primary structure comprises 381 residues: Chaperone protein DnaJ (381 aa).

A J domain is found at 5 to 70 (DFYEVLGVSR…QKKAAYDQYG (66 aa)). The CR-type zinc finger occupies 136–214 (GVSKEIEVPT…CHGQGRKQKT (79 aa)). Zn(2+)-binding residues include Cys-149, Cys-152, Cys-166, Cys-169, Cys-188, Cys-191, Cys-202, and Cys-205. 4 CXXCXGXG motif repeats span residues 149–156 (CDTCEGTG), 166–173 (CGTCHGHG), 188–195 (CPTCHGKG), and 202–209 (CNVCHGQG).

Belongs to the DnaJ family. As to quaternary structure, homodimer. The cofactor is Zn(2+).

The protein resides in the cytoplasm. In terms of biological role, participates actively in the response to hyperosmotic and heat shock by preventing the aggregation of stress-denatured proteins and by disaggregating proteins, also in an autonomous, DnaK-independent fashion. Unfolded proteins bind initially to DnaJ; upon interaction with the DnaJ-bound protein, DnaK hydrolyzes its bound ATP, resulting in the formation of a stable complex. GrpE releases ADP from DnaK; ATP binding to DnaK triggers the release of the substrate protein, thus completing the reaction cycle. Several rounds of ATP-dependent interactions between DnaJ, DnaK and GrpE are required for fully efficient folding. Also involved, together with DnaK and GrpE, in the DNA replication of plasmids through activation of initiation proteins. The sequence is that of Chaperone protein DnaJ from Vibrio vulnificus (strain CMCP6).